Consider the following 115-residue polypeptide: Large ribosomal subunit protein bL19 (115 aa).

This sequence belongs to the bacterial ribosomal protein bL19 family.

Functionally, this protein is located at the 30S-50S ribosomal subunit interface and may play a role in the structure and function of the aminoacyl-tRNA binding site. The protein is Large ribosomal subunit protein bL19 of Caldanaerobacter subterraneus subsp. tengcongensis (strain DSM 15242 / JCM 11007 / NBRC 100824 / MB4) (Thermoanaerobacter tengcongensis).